The primary structure comprises 228 residues: Lipoprotein-releasing system ATP-binding protein LolD (228 aa).

Residues 6–227 form the ABC transporter domain; sequence LELLGIDRTY…LKDGKLIDYV (222 aa). Position 42–49 (42–49) interacts with ATP; it reads GPSGSGKS.

This sequence belongs to the ABC transporter superfamily. Lipoprotein translocase (TC 3.A.1.125) family. The complex is composed of two ATP-binding proteins (LolD) and two transmembrane proteins (LolC and LolE).

The protein localises to the cell inner membrane. Functionally, part of the ABC transporter complex LolCDE involved in the translocation of mature outer membrane-directed lipoproteins, from the inner membrane to the periplasmic chaperone, LolA. Responsible for the formation of the LolA-lipoprotein complex in an ATP-dependent manner. In Hyphomonas neptunium (strain ATCC 15444), this protein is Lipoprotein-releasing system ATP-binding protein LolD.